Reading from the N-terminus, the 425-residue chain is Sodium-dependent glucose transporter 1A (425 aa).

The next 11 membrane-spanning stretches (helical) occupy residues 35-55 (LIFV…GVLF), 61-81 (FFLL…IPFC), 84-104 (AVLL…VDTG), 123-143 (ALHF…KLAW), 183-203 (WAYA…FGLF), 228-248 (ALLC…ITYG), 271-291 (SIFW…ATFL), 294-314 (GTMI…LVLF), 320-340 (CLWI…PSGI), 355-375 (AFFV…IGIL), and 382-402 (LPVV…LFPV).

Belongs to the major facilitator superfamily.

It localises to the apical cell membrane. Functionally, may function as a sodium-dependent glucose transporter. Potential channels for urea in the inner medulla of kidney. The sequence is that of Sodium-dependent glucose transporter 1A from Mus musculus (Mouse).